The sequence spans 312 residues: Glycerol-3-phosphate phosphatase (312 aa).

Asp-30 serves as the catalytic Nucleophile. Asp-30, Asp-32, and Asp-251 together coordinate Mg(2+). Asp-32 functions as the Proton donor in the catalytic mechanism.

Belongs to the HAD-like hydrolase superfamily. CbbY/CbbZ/Gph/YieH family. In terms of assembly, homodimer. Mg(2+) serves as cofactor.

The enzyme catalyses O-phospho-L-tyrosyl-[protein] + H2O = L-tyrosyl-[protein] + phosphate. It carries out the reaction sn-glycerol 1-phosphate + H2O = glycerol + phosphate. It catalyses the reaction sn-glycerol 3-phosphate + H2O = glycerol + phosphate. Functionally, glycerol-3-phosphate phosphatase hydrolyzing glycerol-3-phosphate into glycerol. Thereby, regulates the cellular levels of glycerol-3-phosphate a metabolic intermediate of glucose, lipid and energy metabolism. Was also shown to have a 2-phosphoglycolate phosphatase activity and a tyrosine-protein phosphatase activity. However, their physiological relevance is unclear. In vitro, also has a phosphatase activity toward ADP, ATP, GDP and GTP. This Gallus gallus (Chicken) protein is Glycerol-3-phosphate phosphatase.